Reading from the N-terminus, the 88-residue chain is Small ribosomal subunit protein bS20 (88 aa).

This sequence belongs to the bacterial ribosomal protein bS20 family.

Binds directly to 16S ribosomal RNA. This Clostridium kluyveri (strain NBRC 12016) protein is Small ribosomal subunit protein bS20.